Reading from the N-terminus, the 447-residue chain is ATP-dependent protease ATPase subunit HslU (447 aa).

Residues Ile18, 60 to 65, Asp259, Glu325, and Arg397 contribute to the ATP site; that span reads GVGKTE.

This sequence belongs to the ClpX chaperone family. HslU subfamily. A double ring-shaped homohexamer of HslV is capped on each side by a ring-shaped HslU homohexamer. The assembly of the HslU/HslV complex is dependent on binding of ATP.

The protein resides in the cytoplasm. Its function is as follows. ATPase subunit of a proteasome-like degradation complex; this subunit has chaperone activity. The binding of ATP and its subsequent hydrolysis by HslU are essential for unfolding of protein substrates subsequently hydrolyzed by HslV. HslU recognizes the N-terminal part of its protein substrates and unfolds these before they are guided to HslV for hydrolysis. The sequence is that of ATP-dependent protease ATPase subunit HslU from Burkholderia ambifaria (strain MC40-6).